Reading from the N-terminus, the 233-residue chain is 2-C-methyl-D-erythritol 4-phosphate cytidylyltransferase (233 aa).

The protein belongs to the IspD/TarI cytidylyltransferase family. IspD subfamily.

The enzyme catalyses 2-C-methyl-D-erythritol 4-phosphate + CTP + H(+) = 4-CDP-2-C-methyl-D-erythritol + diphosphate. The protein operates within isoprenoid biosynthesis; isopentenyl diphosphate biosynthesis via DXP pathway; isopentenyl diphosphate from 1-deoxy-D-xylulose 5-phosphate: step 2/6. Its function is as follows. Catalyzes the formation of 4-diphosphocytidyl-2-C-methyl-D-erythritol from CTP and 2-C-methyl-D-erythritol 4-phosphate (MEP). This is 2-C-methyl-D-erythritol 4-phosphate cytidylyltransferase from Syntrophotalea carbinolica (strain DSM 2380 / NBRC 103641 / GraBd1) (Pelobacter carbinolicus).